The sequence spans 176 residues: Peptide deformylase 1 (176 aa).

Residues cysteine 99 and histidine 141 each coordinate Fe cation. Glutamate 142 is an active-site residue. A Fe cation-binding site is contributed by histidine 145.

It belongs to the polypeptide deformylase family. It depends on Fe(2+) as a cofactor.

The enzyme catalyses N-terminal N-formyl-L-methionyl-[peptide] + H2O = N-terminal L-methionyl-[peptide] + formate. In terms of biological role, removes the formyl group from the N-terminal Met of newly synthesized proteins. Requires at least a dipeptide for an efficient rate of reaction. N-terminal L-methionine is a prerequisite for activity but the enzyme has broad specificity at other positions. This chain is Peptide deformylase 1, found in Nitrosomonas europaea (strain ATCC 19718 / CIP 103999 / KCTC 2705 / NBRC 14298).